We begin with the raw amino-acid sequence, 201 residues long: Recombination protein RecR (201 aa).

The segment at 58 to 73 adopts a C4-type zinc-finger fold; that stretch reads CEQCASITDTCPCRIC. The 98-residue stretch at 81-178 folds into the Toprim domain; it reads DKLCLVSEWD…ELSRLAQGIP (98 aa).

It belongs to the RecR family.

May play a role in DNA repair. It seems to be involved in an RecBC-independent recombinational process of DNA repair. It may act with RecF and RecO. This is Recombination protein RecR from Maridesulfovibrio salexigens (strain ATCC 14822 / DSM 2638 / NCIMB 8403 / VKM B-1763) (Desulfovibrio salexigens).